Here is a 179-residue protein sequence, read N- to C-terminus: Large ribosomal subunit protein uL5 (179 aa).

It belongs to the universal ribosomal protein uL5 family. Part of the 50S ribosomal subunit; part of the 5S rRNA/L5/L18/L25 subcomplex. Contacts the 5S rRNA and the P site tRNA. Forms a bridge to the 30S subunit in the 70S ribosome.

This is one of the proteins that bind and probably mediate the attachment of the 5S RNA into the large ribosomal subunit, where it forms part of the central protuberance. In the 70S ribosome it contacts protein S13 of the 30S subunit (bridge B1b), connecting the 2 subunits; this bridge is implicated in subunit movement. Contacts the P site tRNA; the 5S rRNA and some of its associated proteins might help stabilize positioning of ribosome-bound tRNAs. In Geobacter sp. (strain M21), this protein is Large ribosomal subunit protein uL5.